We begin with the raw amino-acid sequence, 883 residues long: DNA mismatch repair protein MutS (883 aa).

Residue 602 to 609 participates in ATP binding; sequence GPNMSGKS.

The protein belongs to the DNA mismatch repair MutS family.

Functionally, this protein is involved in the repair of mismatches in DNA. It is possible that it carries out the mismatch recognition step. This protein has a weak ATPase activity. This chain is DNA mismatch repair protein MutS, found in Staphylococcus haemolyticus (strain JCSC1435).